The primary structure comprises 200 residues: Recombination protein RecR (200 aa).

Residues 60–75 (CVYCQALTEDDVCNIC) form a C4-type zinc finger. Residues 83–177 (TKLCIIESML…KISRIGFGVP (95 aa)) form the Toprim domain.

This sequence belongs to the RecR family.

In terms of biological role, may play a role in DNA repair. It seems to be involved in an RecBC-independent recombinational process of DNA repair. It may act with RecF and RecO. The sequence is that of Recombination protein RecR from Francisella tularensis subsp. mediasiatica (strain FSC147).